The primary structure comprises 813 residues: Striatin-interacting protein 1 homolog (813 aa).

Disordered regions lie at residues 1 to 41 and 307 to 379; these read MDGV…SEAP and RAAS…RDEV. The span at 9-18 shows a compositional bias: polar residues; the sequence is NNKQKQNQML. Residues 22 to 35 are compositionally biased toward basic and acidic residues; sequence MRGEFTRNQRKDSE. The span at 307–316 shows a compositional bias: low complexity; the sequence is RAASPPASAS. The residue at position 310 (S310) is a Phosphoserine. Positions 331-352 are enriched in basic and acidic residues; it reads KALIKQDNLDTFNEKDPYKADD. Acidic residues predominate over residues 353–367; it reads SHEDEEENDDNDNSL.

Belongs to the STRIP family. In terms of assembly, part of the core of STRIPAK complexes composed of PP2A catalytic and scaffolding subunits, the striatins (PP2A regulatory subunits), the striatin-associated proteins MOB4, STRIP1 and STRIP2, PDCD10 and members of the STE20 kinases, such as STK24 and STK26.

The protein resides in the cytoplasm. Functionally, plays a role in the regulation of cell morphology and cytoskeletal organization. Required in the cortical actin filament dynamics and cell shape. Part of the striatin-interacting phosphatase and kinase (STRIPAK) complexes. STRIPAK complexes have critical roles in protein (de)phosphorylation and are regulators of multiple signaling pathways including Hippo, MAPK, nuclear receptor and cytoskeleton remodeling. Different types of STRIPAK complexes are involved in a variety of biological processes such as cell growth, differentiation, apoptosis, metabolism and immune regulation. This chain is Striatin-interacting protein 1 homolog (strip1), found in Danio rerio (Zebrafish).